Consider the following 155-residue polypeptide: Endoribonuclease YbeY (155 aa).

Residues His114, His118, and His124 each contribute to the Zn(2+) site.

It belongs to the endoribonuclease YbeY family. It depends on Zn(2+) as a cofactor.

It localises to the cytoplasm. Its function is as follows. Single strand-specific metallo-endoribonuclease involved in late-stage 70S ribosome quality control and in maturation of the 3' terminus of the 16S rRNA. This chain is Endoribonuclease YbeY, found in Shigella flexneri serotype 5b (strain 8401).